Consider the following 124-residue polypeptide: Protein MGF 110-4L-B (124 aa).

A signal peptide spans 1–18; sequence MLVIFLGILGLLANQVLG. Asparagine 64 is a glycosylation site (N-linked (GlcNAc...) asparagine; by host). A Prevents secretion from ER motif is present at residues 121–124; the sequence is KEDL.

It belongs to the asfivirus MGF 110 family.

The protein localises to the virion. It is found in the host endoplasmic reticulum-Golgi intermediate compartment. Causes the redistribution of lumenal ER protein to an enlarged ERGIC compartment. The protein is Protein MGF 110-4L-B of African swine fever virus (isolate Portugal/Lis 57/1957) (ASFV).